The following is a 1104-amino-acid chain: Protein KIBRA (1104 aa).

2 WW domains span residues 6–39 and 53–86; these read LPLP…DPRD and DELP…DPRV. A coiled-coil region spans residues 107 to 193; it reads LSAQKEIYQV…ELQFKERGFQ (87 aa). Residue Ser141 is modified to Phosphoserine. Disordered stretches follow at residues 429–449 and 509–547; these read SMQS…RGSL and TQKA…SPPC. The span at 527–542 shows a compositional bias: low complexity; the sequence is TPRSMTSLSPRSSLSS. Ser535 bears the Phosphoserine mark. The residue at position 542 (Ser542) is a Phosphoserine; by CDK1. Residues 659–782 form the C2 domain; it reads GATRVQIALK…RSGERSTRWY (124 aa). The tract at residues 822–949 is disordered; that stretch reads LEKRQEGRSS…DSSTLSKKPP (128 aa). Residues 836–1104 are interaction with histone H3; the sequence is EGSWTYEEEA…NIPALSADDV (269 aa). The segment covering 841–862 has biased composition (acidic residues); sequence YEEEASENEAVAEEEEEGEEDV. Residues Ser887, Ser891, and Ser919 each carry the phosphoserine modification. The segment covering 916–930 has biased composition (polar residues); sequence IIRSKTFSPGPQSQY. Thr921 is modified (phosphothreonine). At Ser923 the chain carries Phosphoserine; by CDK1. Ser939 carries the phosphoserine modification. Interaction with PRKCZ regions lie at residues 945–988 and 948–967; these read SKKP…LDLQ and PPFV…RPSS. Phosphoserine; by PKC/PRKCZ is present on residues Ser967 and Ser970. Residues 994–1024 are a coiled coil; the sequence is HSQLTQEISVLKELKEHLEQAKNHGEKELPQ. The short motif at 1102-1104 is the ADDV motif element; sequence DDV.

The protein belongs to the WWC family. KIBRA subfamily. Homodimer. Forms heterodimers with WWC2 and WWC3. Interacts with DDN. Interacts with DYNLL1 and histone H3. The interaction with DYNLL1 is mandatory for the recruitment and transactivation functions of ESR1 or DYNLL1 to the target chromatin and the interaction with histone H3 ensures proper regulatory interaction of WWC1-DYNLL1-ESR1 complexes with target chromatin. Interacts (via WW domains) with DDR1 (via PPxY motif) in a collagen-regulated manner. Interacts with PRKCZ (via the protein kinase domain). Forms a tripartite complex with DDR1 and PRKCZ, but predominantly in the absence of collagen. Interacts (via the ADDV motif) with PATJ (via PDZ domain 8). Interacts (via WW domains) with SYNPO (via PPxY motifs). Interacts with NF2 and SNX4. Interacts with CCDC141; retains AMPAR in the cytosol after internalization. Interacts with DLC1 and PRKCZ. Interacts (via WW domains) with LATS1 and LATS2. Post-translationally, phosphorylation at Ser-542 and Ser-923 by CDK1 in response to spindle damage stress regulates mitotic exit, these two sites are dephosphorylated by CDC14B. In terms of tissue distribution, mammary epithelium.

It localises to the cytoplasm. Its subcellular location is the perinuclear region. The protein localises to the nucleus. The protein resides in the cell projection. It is found in the ruffle membrane. It localises to the cytosol. In terms of biological role, regulator of the Hippo signaling pathway, also known as the Salvador-Warts-Hippo (SWH) pathway. Enhances phosphorylation of LATS1 and YAP1 and negatively regulates cell proliferation and organ growth due to a suppression of the transcriptional activity of YAP1, the major effector of the Hippo pathway. Along with NF2 can synergistically induce the phosphorylation of LATS1 and LATS2 and function in the regulation of Hippo signaling pathway. Acts as a transcriptional coactivator of ESR1 which plays an essential role in DYNLL1-mediated ESR1 transactivation. Modulates directional migration of podocytes. May be associated with memory performance. Regulates collagen-stimulated activation of the ERK/MAPK cascade. Plays an important role in regulating AMPA-selective glutamate receptors (AMPARs) trafficking. In Mus musculus (Mouse), this protein is Protein KIBRA (Wwc1).